The primary structure comprises 399 residues: NADH-quinone oxidoreductase subunit D 2 (399 aa).

Positions 1 to 20 (MIASKESNSAATPATSAPTL) are disordered. The segment covering 9-20 (SAATPATSAPTL) has biased composition (low complexity).

It belongs to the complex I 49 kDa subunit family. In terms of assembly, NDH-1 is composed of 14 different subunits. Subunits NuoB, C, D, E, F, and G constitute the peripheral sector of the complex.

It localises to the cell inner membrane. The catalysed reaction is a quinone + NADH + 5 H(+)(in) = a quinol + NAD(+) + 4 H(+)(out). NDH-1 shuttles electrons from NADH, via FMN and iron-sulfur (Fe-S) centers, to quinones in the respiratory chain. The immediate electron acceptor for the enzyme in this species is believed to be ubiquinone. Couples the redox reaction to proton translocation (for every two electrons transferred, four hydrogen ions are translocated across the cytoplasmic membrane), and thus conserves the redox energy in a proton gradient. This is NADH-quinone oxidoreductase subunit D 2 from Opitutus terrae (strain DSM 11246 / JCM 15787 / PB90-1).